We begin with the raw amino-acid sequence, 414 residues long: Sex comb on midleg-like protein 4 (414 aa).

Ser55 and Ser65 each carry phosphoserine. The segment covering 257 to 276 (HRGSLHPSSSLYCKRQNSGD) has biased composition (polar residues). The tract at residues 257-343 (HRGSLHPSSS…DARRPRSRNP (87 aa)) is disordered. Low complexity predominate over residues 284–304 (AATAGGPRTSPMSSGGPSAPG). The 67-residue stretch at 288-354 (GGPRTSPMSS…AWTVEDVVWF (67 aa)) folds into the SAM domain. Residues 312–332 (PKRNTTSLEGNRCASSPSQDA) show a composition bias toward polar residues.

This sequence belongs to the SCM family.

It localises to the nucleus. Its function is as follows. Putative Polycomb group (PcG) protein. PcG proteins act by forming multiprotein complexes, which are required to maintain the transcriptionally repressive state of homeotic genes throughout development. This Homo sapiens (Human) protein is Sex comb on midleg-like protein 4 (SCML4).